Consider the following 1294-residue polypeptide: uncharacterized protein (1294 aa).

Topologically, residues M1–Y375 are extracellular. The ABC transporter 1 domain maps to L28–Q287. N41 is a glycosylation site (N-linked (GlcNAc...) asparagine). G62 to T69 contributes to the ATP binding site. N86, N101, N151, N341, N349, and N371 each carry an N-linked (GlcNAc...) asparagine glycan. The helical transmembrane segment at V376–Y396 threads the bilayer. Residues Y397–Q495 are Cytoplasmic-facing. A helical membrane pass occupies residues F496–V516. At S517 to T530 the chain is on the extracellular side. A glycan (N-linked (GlcNAc...) asparagine) is linked at N528. Residues F531–V551 form a helical membrane-spanning segment. Over R552–P604 the chain is Cytoplasmic. A helical transmembrane segment spans residues A605–L625. At H626 to L1038 the chain is on the extracellular side. The 263-residue stretch at I679 to S941 folds into the ABC transporter 2 domain. ATP is bound at residue G727–S734. N-linked (GlcNAc...) asparagine glycosylation is present at N983. The helical transmembrane segment at M1039–V1059 threads the bilayer. Residues K1060–E1120 lie on the Cytoplasmic side of the membrane. The helical transmembrane segment at L1121–L1141 threads the bilayer. At P1142–Y1266 the chain is on the extracellular side. Residues L1267–A1287 form a helical membrane-spanning segment. The Cytoplasmic portion of the chain corresponds to K1288–W1294.

The protein belongs to the ABC transporter superfamily. ABCG family. PDR (TC 3.A.1.205) subfamily.

The protein resides in the membrane. This is an uncharacterized protein from Saccharomyces cerevisiae (strain ATCC 204508 / S288c) (Baker's yeast).